A 668-amino-acid polypeptide reads, in one-letter code: Protein PLASTID TRANSCRIPTIONALLY ACTIVE 10 (668 aa).

Residues Met1–Arg40 constitute a chloroplast transit peptide. An S1 motif domain is found at Gly272–Arg340. Positions Arg362 to Glu391 are enriched in basic and acidic residues. The segment at Arg362–Leu394 is disordered. Ser434 carries the phosphoserine modification. Residues Lys611 to Asp668 form a disordered region. The segment covering Gln621 to Asp641 has biased composition (acidic residues). Over residues Ser646–Asp668 the composition is skewed to polar residues.

As to quaternary structure, component of the transcriptionally active chromosome (TAC) complexes. Interacts with PTAC7.

The protein resides in the plastid. It is found in the chloroplast. The protein is Protein PLASTID TRANSCRIPTIONALLY ACTIVE 10 of Arabidopsis thaliana (Mouse-ear cress).